A 472-amino-acid polypeptide reads, in one-letter code: Nucleoporin NUP49/NSP49 (472 aa).

The stretch at 2–3 (FG) is one FG 1 repeat. The GLFG 1 repeat unit spans residues 14 to 17 (GLFG). Residues 28-104 (NTGFSFGGTQ…TANTGGGLFG (77 aa)) are disordered. An FG 2 repeat occupies 33 to 34 (FG). One copy of the GLFG 2 repeat lies at 48–51 (GLFG). The segment covering 64–80 (SFGQQQQQSQTNAFGGS) has biased composition (low complexity). FG repeat units lie at residues 65 to 66 (FG) and 77 to 78 (FG). 2 GLFG repeats span residues 86–89 (GLFG) and 101–104 (GLFG). The SLFG 1 repeat unit spans residues 113–116 (SLFG). GLFG repeat units follow at residues 125-128 (GLFG) and 148-151 (GLFG). The stretch at 159 to 162 (SLFG) is one SLFG 2 repeat. The stretch at 175–178 (GMFG) is one GLFG 7; approximate repeat. An SLFG 3 repeat occupies 185 to 188 (SLFG). The stretch at 199-202 (GLFG) is one GLFG 8 repeat. One copy of the SLFG 4 repeat lies at 210–213 (SLFG). The segment at 211 to 242 (LFGSSNNNNNNNNSNNIMSASGGLFGNQQQQL) is disordered. Residues 214-226 (SSNNNNNNNNSNN) show a composition bias toward low complexity. A GLFG 9 repeat occupies 233–236 (GLFG).

The protein belongs to the nucleoporin GLFG family. Component of the nuclear pore complex (NPC). NPC constitutes the exclusive means of nucleocytoplasmic transport. NPCs allow the passive diffusion of ions and small molecules and the active, nuclear transport receptor-mediated bidirectional transport of macromolecules such as proteins, RNAs, ribonucleoparticles (RNPs), and ribosomal subunits across the nuclear envelope. Due to its 8-fold rotational symmetry, all subunits are present with 8 copies or multiples thereof. NUP49 is part of the NUP57 subcomplex (NIC96, NSP1, NUP49, NUP57) interacting with NUP57. Interacts through its FG repeats with karyopherins.

The protein localises to the nucleus. The protein resides in the nuclear pore complex. It localises to the nucleus membrane. Functionally, functions as a component of the nuclear pore complex (NPC). NPC components, collectively referred to as nucleoporins (NUPs), can play the role of both NPC structural components and of docking or interaction partners for transiently associated nuclear transport factors. Active directional transport is assured by both, a Phe-Gly (FG) repeat affinity gradient for these transport factors across the NPC and a transport cofactor concentration gradient across the nuclear envelope (GSP1 and GSP2 GTPases associated predominantly with GTP in the nucleus, with GDP in the cytoplasm). NUP49 plays an important role in several nuclear transport pathways including poly(A)+ RNA, tRNA, and pre-ribosome transport. The protein is Nucleoporin NUP49/NSP49 (NUP49) of Saccharomyces cerevisiae (strain ATCC 204508 / S288c) (Baker's yeast).